Reading from the N-terminus, the 279-residue chain is 2-dehydro-3-deoxyphosphooctonate aldolase (279 aa).

Belongs to the KdsA family.

The protein localises to the cytoplasm. It catalyses the reaction D-arabinose 5-phosphate + phosphoenolpyruvate + H2O = 3-deoxy-alpha-D-manno-2-octulosonate-8-phosphate + phosphate. Its pathway is carbohydrate biosynthesis; 3-deoxy-D-manno-octulosonate biosynthesis; 3-deoxy-D-manno-octulosonate from D-ribulose 5-phosphate: step 2/3. The protein operates within bacterial outer membrane biogenesis; lipopolysaccharide biosynthesis. This Methylobacillus flagellatus (strain ATCC 51484 / DSM 6875 / VKM B-1610 / KT) protein is 2-dehydro-3-deoxyphosphooctonate aldolase.